A 378-amino-acid chain; its full sequence is Alanine racemase (378 aa).

Lys40 acts as the Proton acceptor; specific for D-alanine in catalysis. An N6-(pyridoxal phosphate)lysine modification is found at Lys40. A substrate-binding site is contributed by Arg140. The active-site Proton acceptor; specific for L-alanine is the Tyr270. Met317 provides a ligand contact to substrate.

This sequence belongs to the alanine racemase family. It depends on pyridoxal 5'-phosphate as a cofactor.

It carries out the reaction L-alanine = D-alanine. It functions in the pathway amino-acid biosynthesis; D-alanine biosynthesis; D-alanine from L-alanine: step 1/1. Its function is as follows. Catalyzes the interconversion of L-alanine and D-alanine. May also act on other amino acids. This Lacticaseibacillus paracasei (strain ATCC 334 / BCRC 17002 / CCUG 31169 / CIP 107868 / KCTC 3260 / NRRL B-441) (Lactobacillus paracasei) protein is Alanine racemase (alr).